Consider the following 497-residue polypeptide: Apolipoprotein N-acyltransferase (497 aa).

6 helical membrane passes run 21 to 41, 51 to 71, 85 to 105, 119 to 139, 157 to 177, and 189 to 209; these read FAPF…ALLW, ALTG…WLYV, VLAL…TGWI, GMVA…FTGF, FAPV…AAWL, and FWLG…IHWT. The CN hydrolase domain occupies 221–461; that stretch reads LQGNIPQNMK…GLHSTAQGFG (241 aa). Glu259 acts as the Proton acceptor in catalysis. Lys319 is a catalytic residue. Residue Cys371 is the Nucleophile of the active site. A helical membrane pass occupies residues 472–492; sequence SLVFALIGLLLLAGSLAAFSG.

The protein belongs to the CN hydrolase family. Apolipoprotein N-acyltransferase subfamily.

The protein resides in the cell inner membrane. It carries out the reaction N-terminal S-1,2-diacyl-sn-glyceryl-L-cysteinyl-[lipoprotein] + a glycerophospholipid = N-acyl-S-1,2-diacyl-sn-glyceryl-L-cysteinyl-[lipoprotein] + a 2-acyl-sn-glycero-3-phospholipid + H(+). The protein operates within protein modification; lipoprotein biosynthesis (N-acyl transfer). Catalyzes the phospholipid dependent N-acylation of the N-terminal cysteine of apolipoprotein, the last step in lipoprotein maturation. This chain is Apolipoprotein N-acyltransferase, found in Nitrosomonas europaea (strain ATCC 19718 / CIP 103999 / KCTC 2705 / NBRC 14298).